The sequence spans 429 residues: Aspartate--tRNA(Asp/Asn) ligase (429 aa).

Position 167 (glutamate 167) interacts with L-aspartate. Positions 189–192 (QLYK) are aspartate. Arginine 210 is a binding site for L-aspartate. Residues 210–212 (RAE) and glutamate 352 contribute to the ATP site. Mg(2+) is bound by residues glutamate 352 and serine 355. Positions 355 and 359 each coordinate L-aspartate. 400 to 403 (GLAR) contributes to the ATP binding site.

This sequence belongs to the class-II aminoacyl-tRNA synthetase family. Type 2 subfamily. As to quaternary structure, homodimer. Mg(2+) is required as a cofactor.

Its subcellular location is the cytoplasm. The catalysed reaction is tRNA(Asx) + L-aspartate + ATP = L-aspartyl-tRNA(Asx) + AMP + diphosphate. In terms of biological role, aspartyl-tRNA synthetase with relaxed tRNA specificity since it is able to aspartylate not only its cognate tRNA(Asp) but also tRNA(Asn). Reaction proceeds in two steps: L-aspartate is first activated by ATP to form Asp-AMP and then transferred to the acceptor end of tRNA(Asp/Asn). In Saccharolobus solfataricus (strain ATCC 35092 / DSM 1617 / JCM 11322 / P2) (Sulfolobus solfataricus), this protein is Aspartate--tRNA(Asp/Asn) ligase.